Reading from the N-terminus, the 129-residue chain is uncharacterized protein (129 aa).

This is an uncharacterized protein from Oryza sativa subsp. indica (Rice).